The primary structure comprises 450 residues: Bifunctional protein GlmU (450 aa).

Positions 1–229 (MGVALIVLAA…EAETLGINTR (229 aa)) are pyrophosphorylase. UDP-N-acetyl-alpha-D-glucosamine contacts are provided by residues 8-11 (LAAG), lysine 22, glutamine 75, 80-81 (GT), 103-105 (YGD), glycine 141, glutamate 155, asparagine 170, and asparagine 227. Residue aspartate 105 participates in Mg(2+) binding. Asparagine 227 lines the Mg(2+) pocket. The segment at 230-250 (TELAAAEQAFQARARARALED) is linker. The segment at 251–450 (GVTLADPATT…RARKSAKGAQ (200 aa)) is N-acetyltransferase. The UDP-N-acetyl-alpha-D-glucosamine site is built by arginine 316 and lysine 334. Histidine 346 acts as the Proton acceptor in catalysis. UDP-N-acetyl-alpha-D-glucosamine contacts are provided by tyrosine 349 and asparagine 360. Residues alanine 363, 369–370 (NY), serine 388, threonine 406, and arginine 423 each bind acetyl-CoA.

It in the N-terminal section; belongs to the N-acetylglucosamine-1-phosphate uridyltransferase family. This sequence in the C-terminal section; belongs to the transferase hexapeptide repeat family. Homotrimer. It depends on Mg(2+) as a cofactor.

It localises to the cytoplasm. It catalyses the reaction alpha-D-glucosamine 1-phosphate + acetyl-CoA = N-acetyl-alpha-D-glucosamine 1-phosphate + CoA + H(+). The enzyme catalyses N-acetyl-alpha-D-glucosamine 1-phosphate + UTP + H(+) = UDP-N-acetyl-alpha-D-glucosamine + diphosphate. The protein operates within nucleotide-sugar biosynthesis; UDP-N-acetyl-alpha-D-glucosamine biosynthesis; N-acetyl-alpha-D-glucosamine 1-phosphate from alpha-D-glucosamine 6-phosphate (route II): step 2/2. It participates in nucleotide-sugar biosynthesis; UDP-N-acetyl-alpha-D-glucosamine biosynthesis; UDP-N-acetyl-alpha-D-glucosamine from N-acetyl-alpha-D-glucosamine 1-phosphate: step 1/1. Its pathway is bacterial outer membrane biogenesis; LPS lipid A biosynthesis. Functionally, catalyzes the last two sequential reactions in the de novo biosynthetic pathway for UDP-N-acetylglucosamine (UDP-GlcNAc). The C-terminal domain catalyzes the transfer of acetyl group from acetyl coenzyme A to glucosamine-1-phosphate (GlcN-1-P) to produce N-acetylglucosamine-1-phosphate (GlcNAc-1-P), which is converted into UDP-GlcNAc by the transfer of uridine 5-monophosphate (from uridine 5-triphosphate), a reaction catalyzed by the N-terminal domain. This Dinoroseobacter shibae (strain DSM 16493 / NCIMB 14021 / DFL 12) protein is Bifunctional protein GlmU.